We begin with the raw amino-acid sequence, 275 residues long: Anthracycline biosynthesis protein DnrV (275 aa).

VOC domains lie at 8-136 (APAW…VWRK) and 150-263 (SVGW…VVEL).

The protein operates within antibiotic biosynthesis; daunorubicin biosynthesis. It functions in the pathway antibiotic biosynthesis; carminomycin biosynthesis. Involved in the biosynthesis of the anthracyclines carminomycin and daunorubicin (daunomycin) which are aromatic polyketide antibiotics that exhibit high cytotoxicity and are widely applied in the chemotherapy of a variety of cancers. In vivo, it acts jointly with DoxA in the conversion of 13-deoxycarminomycin and 13-deoxydaunorubicin to yield carminomycin and daunorubicin, respectively. In vitro, it also acts jointly with DoxA in the C-14 hydroxylation of daunorubicin to form doxorubicin, although this strain is not a doxorubicin producer. The sequence is that of Anthracycline biosynthesis protein DnrV (dnrV) from Streptomyces peucetius.